Reading from the N-terminus, the 295-residue chain is Nitrogenase iron protein (295 aa).

10 to 17 (GKGGIGKS) serves as a coordination point for ATP. A [4Fe-4S] cluster-binding site is contributed by Cys98. Arg101 is modified (ADP-ribosylarginine; by dinitrogenase reductase ADP-ribosyltransferase). Cys133 contributes to the [4Fe-4S] cluster binding site.

It belongs to the NifH/BchL/ChlL family. In terms of assembly, homodimer. Requires [4Fe-4S] cluster as cofactor. In terms of processing, the reversible ADP-ribosylation of Arg-101 inactivates the nitrogenase reductase and regulates nitrogenase activity.

The catalysed reaction is N2 + 8 reduced [2Fe-2S]-[ferredoxin] + 16 ATP + 16 H2O = H2 + 8 oxidized [2Fe-2S]-[ferredoxin] + 2 NH4(+) + 16 ADP + 16 phosphate + 6 H(+). In terms of biological role, the key enzymatic reactions in nitrogen fixation are catalyzed by the nitrogenase complex, which has 2 components: the iron protein and the molybdenum-iron protein. This is Nitrogenase iron protein from Tolumonas auensis (strain DSM 9187 / NBRC 110442 / TA 4).